Reading from the N-terminus, the 169-residue chain is MAASLSSRLIKGIANLKAVRSSRLTSASVYQNGMMRFSSTVPSDSDTHDDFKPTQKVPPDSTDSLKDIVENDVKDNPVMIYMKGVPESPQCGFSSLAVRVLQQYNVPISSRNILEDQELKNAVKSFSHWPTFPQIFIKGEFIGGSDIILNMHKEGELEQKLKDVSGNQD.

Residues 1-37 (MAASLSSRLIKGIANLKAVRSSRLTSASVYQNGMMRF) constitute a mitochondrion transit peptide. A disordered region spans residues 38 to 61 (SSTVPSDSDTHDDFKPTQKVPPDS). In terms of domain architecture, Glutaredoxin spans 66–168 (KDIVENDVKD…QKLKDVSGNQ (103 aa)). Residue lysine 83 participates in glutathione binding. Cysteine 91 is a binding site for [2Fe-2S] cluster. Glutathione contacts are provided by residues lysine 120, phenylalanine 132, and 145–146 (SD).

The protein belongs to the glutaredoxin family. CGFS subfamily. [2Fe-2S]-bridged holo-homodimer. Interacts in vitro with SUFE1, BOLA1, BOLA2 and BOLA4. Interacts in vivo only with BOLA4.

It is found in the mitochondrion. May only reduce GSH-thiol disulfides, but not protein disulfides. Participates probably to the maturation of iron-sulfur proteins and to the regulation of the redox state of the BOLA proteins. The chain is Monothiol glutaredoxin-S15, mitochondrial from Arabidopsis thaliana (Mouse-ear cress).